Reading from the N-terminus, the 404-residue chain is Proteasomal ubiquitin receptor ADRM1-B (404 aa).

The Pru domain occupies 17–130 (SSSKYLVEFR…RKVNEYLNNP (114 aa)). Disordered regions lie at residues 128–149 (NNPP…LSAL), 195–258 (GSGG…TSPT), and 376–404 (FAKA…MSLD). Residues 195–247 (GSGGPTTSSSSSSSRSQSAAVTPSSTTSSTRTTSAPVAPAAAPATTPSPAVSS) show a composition bias toward low complexity. Polar residues predominate over residues 248 to 258 (NDGASAATSPT). The DEUBAD domain maps to 278 to 390 (TGEGGQQVDL…QSTSSQKERE (113 aa)). Basic and acidic residues predominate over residues 386–395 (QKERESSEKK).

The protein belongs to the ADRM1 family. As to quaternary structure, component of the 19S proteasome regulatory particle complex. The 26S proteasome consists of a 20S core particle (CP) and two 19S regulatory subunits (RP).

The protein localises to the cytoplasm. Its subcellular location is the nucleus. Component of the 26S proteasome, a multiprotein complex involved in the ATP-dependent degradation of ubiquitinated proteins. This complex plays a key role in the maintenance of protein homeostasis by removing misfolded or damaged proteins, which could impair cellular functions, and by removing proteins whose functions are no longer required. Therefore, the proteasome participates in numerous cellular processes, including cell cycle progression, apoptosis, or DNA damage repair. Within the complex, functions as a proteasomal ubiquitin receptor. The polypeptide is Proteasomal ubiquitin receptor ADRM1-B (adrm1-b) (Xenopus laevis (African clawed frog)).